The chain runs to 61 residues: Small ribosomal subunit protein uS14 (61 aa).

Zn(2+)-binding residues include Cys-24, Cys-27, Cys-40, and Cys-43.

The protein belongs to the universal ribosomal protein uS14 family. Zinc-binding uS14 subfamily. Part of the 30S ribosomal subunit. Contacts proteins S3 and S10. Requires Zn(2+) as cofactor.

In terms of biological role, binds 16S rRNA, required for the assembly of 30S particles and may also be responsible for determining the conformation of the 16S rRNA at the A site. In Oleidesulfovibrio alaskensis (strain ATCC BAA-1058 / DSM 17464 / G20) (Desulfovibrio alaskensis), this protein is Small ribosomal subunit protein uS14.